The primary structure comprises 378 residues: 3-dehydroquinate synthase (378 aa).

NAD(+) is bound by residues 115–119, 139–140, lysine 152, and lysine 161; these read GVVGD and TS. Zn(2+)-binding residues include glutamate 194, histidine 256, and histidine 275.

It belongs to the sugar phosphate cyclases superfamily. Dehydroquinate synthase family. Co(2+) is required as a cofactor. Zn(2+) serves as cofactor. It depends on NAD(+) as a cofactor.

It localises to the cytoplasm. The catalysed reaction is 7-phospho-2-dehydro-3-deoxy-D-arabino-heptonate = 3-dehydroquinate + phosphate. It participates in metabolic intermediate biosynthesis; chorismate biosynthesis; chorismate from D-erythrose 4-phosphate and phosphoenolpyruvate: step 2/7. Catalyzes the conversion of 3-deoxy-D-arabino-heptulosonate 7-phosphate (DAHP) to dehydroquinate (DHQ). This is 3-dehydroquinate synthase from Brucella canis (strain ATCC 23365 / NCTC 10854 / RM-666).